Here is a 1366-residue protein sequence, read N- to C-terminus: DNA-directed RNA polymerase subunit beta' (1366 aa).

Basic residues predominate over residues 1–20 (MTSSKPKKTSRVRKTTKNSK). The tract at residues 1–33 (MTSSKPKKTSRVRKTTKNSKKNNPVTMPALAKT) is disordered. The Zn(2+) site is built by cysteine 248, cysteine 315, cysteine 322, and cysteine 325. Residues 1291-1366 (YTVDMPQSPA…LQEEGLLSDE (76 aa)) are disordered. Residues 1354–1366 (LEGLQEEGLLSDE) show a composition bias toward low complexity.

The protein belongs to the RNA polymerase beta' chain family. RpoC2 subfamily. In terms of assembly, in cyanobacteria the RNAP catalytic core is composed of 2 alpha, 1 beta, 1 beta', 1 gamma and 1 omega subunit. When a sigma factor is associated with the core the holoenzyme is formed, which can initiate transcription. Zn(2+) serves as cofactor.

It carries out the reaction RNA(n) + a ribonucleoside 5'-triphosphate = RNA(n+1) + diphosphate. Functionally, DNA-dependent RNA polymerase catalyzes the transcription of DNA into RNA using the four ribonucleoside triphosphates as substrates. This is DNA-directed RNA polymerase subunit beta' from Prochlorococcus marinus (strain AS9601).